We begin with the raw amino-acid sequence, 604 residues long: Kelch-like protein 15 (604 aa).

A BTB domain is found at 31–98 (LDVTLVIEDH…MYYGTIELSM (68 aa)). The region spanning 133-237 (CAEIMRLLDD…TPTSVFEKVK (105 aa)) is the BACK domain. 5 Kelch repeats span residues 328-379 (FVFL…VIGK), 381-426 (IYAV…VLNN), 428-473 (LFIT…NKSK), 489-542 (KLYV…VLDK), and 544-590 (IMVL…VCNL).

As to quaternary structure, homodimer. Dimerization does not affect PPP2R5B-binding, but is required for its proteasomal degradation. Interacts with CUL3. Directly interacts with PPP2R5B; this interaction leads to PPP2R5B proteasomal degradation. Interacts with RBBP8/CtIP; this interaction leads to RBBP8 proteasomal degradation. Interacts with PACMP micropeptide; interaction prevents ubiquitination and degradation of RBBP8/CtIP.

Its subcellular location is the nucleus. Its pathway is protein modification; protein ubiquitination. In terms of biological role, substrate-specific adapter for CUL3 E3 ubiquitin-protein ligase complex. Acts as an adapter for CUL3 to target the serine/threonine-protein phosphatase 2A (PP2A) subunit PPP2R5B for ubiquitination and subsequent proteasomal degradation, thus promoting exchange with other regulatory subunits. Acts as an adapter for CUL3 to target the DNA-end resection factor RBBP8/CtIP for ubiquitination and subsequent proteasomal degradation. Through the regulation of RBBP8/CtIP protein turnover, plays a key role in DNA damage response, favoring DNA double-strand repair through error-prone non-homologous end joining (NHEJ) over error-free, RBBP8-mediated homologous recombination (HR). The sequence is that of Kelch-like protein 15 (KLHL15) from Homo sapiens (Human).